Here is a 104-residue protein sequence, read N- to C-terminus: UPF0045 protein YqgV (104 aa).

The protein belongs to the UPF0045 family.

This is UPF0045 protein YqgV (yqgV) from Bacillus subtilis (strain 168).